The primary structure comprises 1017 residues: Voltage-gated delayed rectifier potassium channel KCNH4 (1017 aa).

At 1 to 232 (MPVMKGLLAP…YSIPKAVWDG (232 aa)) the chain is on the cytoplasmic side. Residues 14–90 (FLDTIATRFD…QRLQKALEGH (77 aa)) form the PAS domain. Residues 93–145 (HRAEICFYRKDGSAFWCLLDMMPIKNELGEVVLFLFSFKDISQSGGPGLGSPG) form the PAC domain. Residues 139 to 170 (PGLGSPGIHGDNNNHENSLGRRGASSRLRSTR) form a disordered region. Residues 233–253 (LILLATFYVAVTVPYNVCFAG) form a helical membrane-spanning segment. Residues 254–262 (DDDTPITSR) lie on the Extracellular side of the membrane. Residues 263 to 283 (HTLVSDIAVEMLFILDIILNF) traverse the membrane as a helical segment. Residues 284–305 (RTTYVSQSGQVVSAPRSIGLHY) lie on the Cytoplasmic side of the membrane. The chain crosses the membrane as a helical span at residues 306 to 326 (LATWFFVDLIAALPFDLLYVF). Residues 327–334 (NITVTSLV) lie on the Extracellular side of the membrane. The helical; Voltage-sensor transmembrane segment at 335–355 (HLLKTVRLLRLLRLLQKLERY) threads the bilayer. The Cytoplasmic portion of the chain corresponds to 356 to 364 (SQCSAVVLT). Residues 365–385 (LLMSVFALLAHWMACVWYVIG) traverse the membrane as a helical segment. The Extracellular segment spans residues 386–427 (RREMEANDPLLWDIGWLHELGKRLEEPYVNGSAGGPSRRSAY). N-linked (GlcNAc...) asparagine glycosylation is present at asparagine 415. Positions 428–448 (IAALYFTLSSLTSVGFGNVCA) form an intramembrane region, pore-forming. The short motif at 440-445 (SVGFGN) is the Selectivity filter element. Residues 449–454 (NTDAEK) lie on the Extracellular side of the membrane. A helical membrane pass occupies residues 455–475 (IFSICTMLIGALMHAVVFGNV). The Cytoplasmic segment spans residues 476–1017 (TAIIQRMYSR…SFQSGSDTFH (542 aa)). The cNMP-binding domain stretch occupies residues 557–621 (LFGAASRGCL…AILGKGDLIG (65 aa)). Disordered stretches follow at residues 690 to 749 (GSEN…PNLS) and 771 to 870 (LVSS…ELAT). Residues 703–726 (PRLSQARSDTLGSSSDKTLPSITE) show a composition bias toward polar residues. Composition is skewed to low complexity over residues 771–786 (LVSS…PALA) and 806–820 (PPQL…FGPP). A coiled-coil region spans residues 873–907 (AEEVKEKVCRLNQEISRLNQEVSQLSRELRQVMGL). The segment at 972–1017 (SELRSSMVPPFPSEPDPLGPSPVPEASPLTPSLLKHSFQSGSDTFH) is disordered. Residues 980–996 (PPFPSEPDPLGPSPVPE) show a composition bias toward pro residues. The segment covering 1008-1017 (SFQSGSDTFH) has biased composition (polar residues).

It belongs to the potassium channel family. H (Eag) (TC 1.A.1.20) subfamily. Kv12.3/KCNH4 sub-subfamily. As to quaternary structure, the potassium channel is probably composed of a homo- or heterotetrameric complex of pore-forming alpha subunits that can associate with modulating beta subunits. Highly expressed in adult testis, and in adult and embryonic brain. In adult brain found in piriform cortex, olfactory tubercle, cerebral cortex, hippocampus pyramidial cells and dentate gyrus and basal ganglia of caudate/putamen and accumbens nucleus. Detected at intermediate levels in lung, spinal cord, and pituitary.

It is found in the membrane. The catalysed reaction is K(+)(in) = K(+)(out). In terms of biological role, pore-forming (alpha) subunit of a voltage-gated delayed rectifier. Activates at more negative voltages, exhibits fast prepulse-independent activation kinetics and deactivates much more slowly, but shows no inactivation. The protein is Voltage-gated delayed rectifier potassium channel KCNH4 of Rattus norvegicus (Rat).